The following is an 89-amino-acid chain: Putative regulatory protein PCC8801_0196 (89 aa).

It belongs to the RemA family.

The chain is Putative regulatory protein PCC8801_0196 from Rippkaea orientalis (strain PCC 8801 / RF-1) (Cyanothece sp. (strain PCC 8801)).